Consider the following 388-residue polypeptide: Succinate--CoA ligase [ADP-forming] subunit beta (388 aa).

In terms of domain architecture, ATP-grasp spans lysine 9–glutamate 244. ATP contacts are provided by residues lysine 46, glycine 53–glycine 55, glutamate 99, threonine 102, and glutamate 107. Residues asparagine 199 and aspartate 213 each coordinate Mg(2+). Substrate is bound by residues asparagine 264 and glycine 321–valine 323.

Belongs to the succinate/malate CoA ligase beta subunit family. In terms of assembly, heterotetramer of two alpha and two beta subunits. It depends on Mg(2+) as a cofactor.

It carries out the reaction succinate + ATP + CoA = succinyl-CoA + ADP + phosphate. The catalysed reaction is GTP + succinate + CoA = succinyl-CoA + GDP + phosphate. The protein operates within carbohydrate metabolism; tricarboxylic acid cycle; succinate from succinyl-CoA (ligase route): step 1/1. Succinyl-CoA synthetase functions in the citric acid cycle (TCA), coupling the hydrolysis of succinyl-CoA to the synthesis of either ATP or GTP and thus represents the only step of substrate-level phosphorylation in the TCA. The beta subunit provides nucleotide specificity of the enzyme and binds the substrate succinate, while the binding sites for coenzyme A and phosphate are found in the alpha subunit. The polypeptide is Succinate--CoA ligase [ADP-forming] subunit beta (Idiomarina loihiensis (strain ATCC BAA-735 / DSM 15497 / L2-TR)).